A 571-amino-acid polypeptide reads, in one-letter code: MSHQPLSCLTEKGDSPSESTGNGPPHLAHPNLDTFTPEELLQQMKELLTENHQLKEAMKLNNQAMKGRFEELSAWTEKQKEERQFFETQSKEAKERLMALSHENEKLKEELGKLKGKSERSSEDPTDDSRLPRAEAEQEKDQLRTQVTRLQAEKADLLGIVSELQLKLNSSGSSEDSFVEIRMAEGEAEGSVKEIKHSPGPTRTVSIGTSRSAEGAKNYLEHEELTVSQLLLCLREGNQKVERLEIALKEAKERVSDFEKKASNRSEIETQTEGSTEKENEEEKGPETVGSEVEALNLQVTSLFKELQEAHTKLSEAELMKKRLQEKCQALERKNSATPSELNEKQELVYTNKKLELQVESMLSEIKMEQAKTEDEKSKLAMLQLTHNKLLQEHNHALKTIEELTRKESEKVDRAVLKELSEKLELAEKALASKQLQMDEMKQTIAKQEEDLETMTVLRAQMEVYCSDFHAERAAREKIHEEKEQLALQLAVLLKENDAFEDGGRQSLMEMQSRHGARTSDPDQQAYLVQRGTEDRDWQQQRNIPIHSCPKCGEVLPDIDTLQIHVMDCII.

Disordered regions lie at residues 1-32 (MSHQPLSCLTEKGDSPSESTGNGPPHLAHPNL) and 100-144 (LSHE…DQLR). A coiled-coil region spans residues 38-170 (EELLQQMKEL…VSELQLKLNS (133 aa)). Residues 58 to 209 (MKLNNQAMKG…GPTRTVSIGT (152 aa)) form an interaction with Rab8 region. The segment covering 100 to 143 (LSHENEKLKEELGKLKGKSERSSEDPTDDSRLPRAEAEQEKDQL) has biased composition (basic and acidic residues). Residues 176 to 181 (DSFVEI) carry the LIR motif. Position 177 is a phosphoserine; by TBK1 (Ser177). Basic and acidic residues predominate over residues 186 to 197 (GEAEGSVKEIKH). 2 disordered regions span residues 186 to 210 (GEAEGSVKEIKHSPGPTRTVSIGTS) and 255 to 291 (VSDFEKKASNRSEIETQTEGSTEKENEEEKGPETVGS). Ser198 carries the post-translational modification Phosphoserine. Residues 201 to 210 (PTRTVSIGTS) are compositionally biased toward polar residues. Residues 233-502 (CLREGNQKVE…LLKENDAFED (270 aa)) are a coiled coil. 2 stretches are compositionally biased toward basic and acidic residues: residues 255-268 (VSDFEKKASNRSEI) and 275-286 (STEKENEEEKGP). At Ser336 the chain carries Phosphoserine. The segment at 405–571 (TRKESEKVDR…LQIHVMDCII (167 aa)) is interaction with HD. Residues 406-514 (RKESEKVDRA…RQSLMEMQSR (109 aa)) form an interaction with MYO6 region. The UBAN signature appears at 468-473 (DFHAER). A Phosphoserine modification is found at Ser520. The CCHC NOA-type zinc finger occupies 541–571 (QRNIPIHSCPKCGEVLPDIDTLQIHVMDCII). Zn(2+) contacts are provided by Cys549, Cys552, His565, and Cys569.

In terms of assembly, self-associates. Interacts with HD. Interacts with GTF3A. Interacts with MYO6. Interacts (via UBAN) with ubiquitinated TFRC. Interacts with GTP-bound Rab8 (RAB8A and/or RAB8B). Interacts with TBC1D17. Interacts with TBK1. Interacts with TRAF3. Binds to linear ubiquitin chains. Interacts with LC3 family members MAP1LC3A, MAP1LC3B, GABARAP, GABARAPL1 and GABARAPL2; OPTN phosphorylation increases the association (at least with MAP1LC3B). Interacts with RAB12; the interaction may be indirect. Interacts with TBK1; this interaction leads to the Golgi localization of TBK1 and its subsequent activation. Interacts with palmitoyltransferase ZDHHC17/HIP14; the interaction does not lead to palmitoylation of OPTN. Interacts with CYLD. Interacts with TOM1; the interaction is indirect and is mediated by MYO6, which acts as a bridge between TOM1 and OPTN. Interacts with USP12; the interaction is independent of USP12 deubiquitinase activity and may be involved in regulation of autophagic flux. Phosphorylated by TBK1, leading to restrict bacterial proliferation in case of infection. As to expression, present in aqueous humor of the eye (at protein level).

It is found in the cytoplasm. It localises to the perinuclear region. The protein localises to the golgi apparatus. Its subcellular location is the trans-Golgi network. The protein resides in the cytoplasmic vesicle. It is found in the autophagosome. It localises to the recycling endosome. In terms of biological role, plays an important role in the maintenance of the Golgi complex, in membrane trafficking, in exocytosis, through its interaction with myosin VI and Rab8. Links myosin VI to the Golgi complex and plays an important role in Golgi ribbon formation. Negatively regulates the induction of IFNB in response to RNA virus infection. Plays a neuroprotective role in the eye and optic nerve. Probably part of the TNF-alpha signaling pathway that can shift the equilibrium toward induction of cell death. May act by regulating membrane trafficking and cellular morphogenesis via a complex that contains Rab8 and huntingtin (HD). Mediates the interaction of Rab8 with the probable GTPase-activating protein TBC1D17 during Rab8-mediated endocytic trafficking, such as that of transferrin receptor (TFRC/TfR); regulates Rab8 recruitment to tubules emanating from the endocytic recycling compartment. Autophagy receptor that interacts directly with both the cargo to become degraded and an autophagy modifier of the MAP1 LC3 family; targets ubiquitin-coated bacteria (xenophagy) and appears to function in the same pathway as SQSTM1 and CALCOCO2/NDP52. The polypeptide is Optineurin (OPTN) (Macaca mulatta (Rhesus macaque)).